Here is a 210-residue protein sequence, read N- to C-terminus: Probable GTP-binding protein EngB (210 aa).

The region spanning 25-199 (TGIEVAFAGR…RQKLDTWFSE (175 aa)) is the EngB-type G domain. GTP is bound by residues 33-40 (GRSNAGKS), 60-64 (GRTQL), 78-81 (DLPG), 145-148 (TKAD), and 178-180 (FSS). Mg(2+)-binding residues include Ser-40 and Thr-62.

This sequence belongs to the TRAFAC class TrmE-Era-EngA-EngB-Septin-like GTPase superfamily. EngB GTPase family. Requires Mg(2+) as cofactor.

Its function is as follows. Necessary for normal cell division and for the maintenance of normal septation. This chain is Probable GTP-binding protein EngB, found in Escherichia coli O6:H1 (strain CFT073 / ATCC 700928 / UPEC).